Consider the following 78-residue polypeptide: Pro-glucagon (78 aa).

This sequence belongs to the glucagon family.

Its subcellular location is the secreted. Plays a key role in glucose metabolism and homeostasis. Regulates blood glucose by increasing gluconeogenesis and decreasing glycolysis. This is Pro-glucagon (gcg) from Atractosteus spatula (Alligator gar).